Consider the following 261-residue polypeptide: Hydroxyethylthiazole kinase (261 aa).

M38 contacts substrate. ATP is bound by residues R114 and T159. G186 serves as a coordination point for substrate.

Belongs to the Thz kinase family. Mg(2+) serves as cofactor.

It catalyses the reaction 5-(2-hydroxyethyl)-4-methylthiazole + ATP = 4-methyl-5-(2-phosphooxyethyl)-thiazole + ADP + H(+). It functions in the pathway cofactor biosynthesis; thiamine diphosphate biosynthesis; 4-methyl-5-(2-phosphoethyl)-thiazole from 5-(2-hydroxyethyl)-4-methylthiazole: step 1/1. Functionally, catalyzes the phosphorylation of the hydroxyl group of 4-methyl-5-beta-hydroxyethylthiazole (THZ). This chain is Hydroxyethylthiazole kinase, found in Streptococcus suis (strain 05ZYH33).